Reading from the N-terminus, the 264-residue chain is Taurine import ATP-binding protein TauB (264 aa).

The ABC transporter domain occupies 4–233 (LQLERISAQY…RYAAGESARA (230 aa)). 38–45 (GPSGSGKT) contacts ATP.

It belongs to the ABC transporter superfamily. Taurine importer (TC 3.A.1.17.1) family. As to quaternary structure, the complex is composed of two ATP-binding proteins (TauB), two transmembrane proteins (TauC) and a solute-binding protein (TauA).

The protein localises to the cell inner membrane. It catalyses the reaction taurine(out) + ATP + H2O = taurine(in) + ADP + phosphate + H(+). In terms of biological role, part of the ABC transporter complex TauABC involved in taurine import. Responsible for energy coupling to the transport system. The chain is Taurine import ATP-binding protein TauB from Pseudomonas fluorescens (strain Pf0-1).